The sequence spans 178 residues: Large ribosomal subunit protein uL6 (178 aa).

This sequence belongs to the universal ribosomal protein uL6 family. Part of the 50S ribosomal subunit.

Its function is as follows. This protein binds to the 23S rRNA, and is important in its secondary structure. It is located near the subunit interface in the base of the L7/L12 stalk, and near the tRNA binding site of the peptidyltransferase center. The sequence is that of Large ribosomal subunit protein uL6 from Symbiobacterium thermophilum (strain DSM 24528 / JCM 14929 / IAM 14863 / T).